The primary structure comprises 686 residues: Protein SDA1 homolog (686 aa).

Phosphoserine occurs at positions 232, 234, and 236. Residues 254–315 (KKGSKNKKKL…SCKERFEVKM (62 aa)) are a coiled coil. Residues 484-508 (LEKEENTENDEDGWESASLSEEEED) form a disordered region. The span at 490-508 (TENDEDGWESASLSEEEED) shows a compositional bias: acidic residues. The residue at position 551 (Thr-551) is a Phosphothreonine. Residues 563-586 (MKKEMDAAPGKAQKRKYLDMDSDE) are disordered. Residues Ser-584, Ser-588, and Ser-594 each carry the phosphoserine modification. The tract at residues 604–649 (KPKSDKETRLATAMAGRTDRKEFVRKKTKINPFSSSTNKEKKKQKN) is disordered.

Belongs to the SDA1 family.

It localises to the nucleus. The protein localises to the nucleolus. Required for 60S pre-ribosomal subunits export to the cytoplasm. This chain is Protein SDA1 homolog (Sdad1), found in Rattus norvegicus (Rat).